We begin with the raw amino-acid sequence, 261 residues long: Cytochrome c oxidase subunit 3 (261 aa).

Residues 1–15 (MTHQTHAYHMVNPSP) are Mitochondrial matrix-facing. A helical transmembrane segment spans residues 16–34 (WPLTGALSALLMTSGLIMW). Over 35–40 (FHFNST) the chain is Mitochondrial intermembrane. Residues 41-66 (ILLMLGLTTNMLTMYQWWRDIIREST) traverse the membrane as a helical segment. Over 67–72 (FQGHHT) the chain is Mitochondrial matrix. The chain crosses the membrane as a helical span at residues 73–105 (PTVQKGLRYGMILFIISEVLFFTGFFWAFYHSS). The Mitochondrial intermembrane portion of the chain corresponds to 106 to 128 (LAPTPELGGCWPPTGIHPLNPLE). Residues 129-152 (VPLLNTSVLLASGVSITWAHHSLM) form a helical membrane-spanning segment. Topologically, residues 153–155 (EGN) are mitochondrial matrix. Residues 156 to 183 (RNHMLQALFITIALGVYFTLLQASEYYE) traverse the membrane as a helical segment. Over 184 to 190 (APFTISD) the chain is Mitochondrial intermembrane. A helical membrane pass occupies residues 191–223 (GVYGSTFFVATGFHGLHVIIGSTFLIVCFFRQL). Over 224-232 (KFHFTSSHH) the chain is Mitochondrial matrix. Residues 233 to 256 (FGFEAAAWYWHFVDVVWLFLYVSI) form a helical membrane-spanning segment. The Mitochondrial intermembrane segment spans residues 257–261 (YWWGS).

Belongs to the cytochrome c oxidase subunit 3 family. Component of the cytochrome c oxidase (complex IV, CIV), a multisubunit enzyme composed of 14 subunits. The complex is composed of a catalytic core of 3 subunits MT-CO1, MT-CO2 and MT-CO3, encoded in the mitochondrial DNA, and 11 supernumerary subunits COX4I, COX5A, COX5B, COX6A, COX6B, COX6C, COX7A, COX7B, COX7C, COX8 and NDUFA4, which are encoded in the nuclear genome. The complex exists as a monomer or a dimer and forms supercomplexes (SCs) in the inner mitochondrial membrane with NADH-ubiquinone oxidoreductase (complex I, CI) and ubiquinol-cytochrome c oxidoreductase (cytochrome b-c1 complex, complex III, CIII), resulting in different assemblies (supercomplex SCI(1)III(2)IV(1) and megacomplex MCI(2)III(2)IV(2)).

The protein resides in the mitochondrion inner membrane. It carries out the reaction 4 Fe(II)-[cytochrome c] + O2 + 8 H(+)(in) = 4 Fe(III)-[cytochrome c] + 2 H2O + 4 H(+)(out). Functionally, component of the cytochrome c oxidase, the last enzyme in the mitochondrial electron transport chain which drives oxidative phosphorylation. The respiratory chain contains 3 multisubunit complexes succinate dehydrogenase (complex II, CII), ubiquinol-cytochrome c oxidoreductase (cytochrome b-c1 complex, complex III, CIII) and cytochrome c oxidase (complex IV, CIV), that cooperate to transfer electrons derived from NADH and succinate to molecular oxygen, creating an electrochemical gradient over the inner membrane that drives transmembrane transport and the ATP synthase. Cytochrome c oxidase is the component of the respiratory chain that catalyzes the reduction of oxygen to water. Electrons originating from reduced cytochrome c in the intermembrane space (IMS) are transferred via the dinuclear copper A center (CU(A)) of subunit 2 and heme A of subunit 1 to the active site in subunit 1, a binuclear center (BNC) formed by heme A3 and copper B (CU(B)). The BNC reduces molecular oxygen to 2 water molecules using 4 electrons from cytochrome c in the IMS and 4 protons from the mitochondrial matrix. This is Cytochrome c oxidase subunit 3 (MT-CO3) from Aepyceros melampus (Impala).